The sequence spans 243 residues: 6-carboxyhexanoate--CoA ligase (243 aa).

The protein belongs to the BioW family. Homodimer. Requires Mg(2+) as cofactor.

It catalyses the reaction heptanedioate + ATP + CoA = 6-carboxyhexanoyl-CoA + AMP + diphosphate. Its pathway is metabolic intermediate metabolism; pimeloyl-CoA biosynthesis; pimeloyl-CoA from pimelate: step 1/1. Catalyzes the transformation of pimelate into pimeloyl-CoA with concomitant hydrolysis of ATP to AMP. The chain is 6-carboxyhexanoate--CoA ligase from Thermocrinis albus (strain DSM 14484 / JCM 11386 / HI 11/12).